The following is a 532-amino-acid chain: Bone morphogenetic protein receptor type-1A (532 aa).

An N-terminal signal peptide occupies residues 1–23 (MPQLYIYIRLLGAYLFIISRVQG). The Extracellular portion of the chain corresponds to 24–152 (QNLDSMLHGT…IGPFFDGSIR (129 aa)). Intrachain disulfides connect cysteine 61-cysteine 82, cysteine 63-cysteine 67, and cysteine 76-cysteine 100. Asparagine 73 carries N-linked (GlcNAc...) asparagine glycosylation. A mediates specificity for BMP ligand region spans residues 107-109 (DFQ). Cystine bridges form between cysteine 110/cysteine 124 and cysteine 125/cysteine 130. The chain crosses the membrane as a helical span at residues 153–176 (WLVLLISMAVCIIAMIIFSSCFCY). Residues 177-532 (KHYCKSISSR…KMVESQDVKI (356 aa)) are Cytoplasmic-facing. The region spanning 204 to 233 (ESLKDLIDQSQSSGSGSGLPLLVQRTIAKQ) is the GS domain. The Protein kinase domain maps to 234 to 525 (IQMVRQVGKG…RIKKTLAKMV (292 aa)). ATP is bound by residues 240-248 (VGKGRYGEV) and lysine 261. The active-site Proton acceptor is the aspartate 362.

It belongs to the protein kinase superfamily. TKL Ser/Thr protein kinase family. TGFB receptor subfamily. Interacts with low affinity with GDF5; positively regulates chondrocyte differentiation. Interacts with BMP4. Interacts with SCUBE3. Interacts with TSC22D1/TSC-22. Interacts with BMP2; the interaction may induce HAMP expression. Interacts with BMP6. Interacts with heterodimers composed of BMP2 and BMP6 in vitro; the interaction may induce HAMP expression. Interacts with TGFBR3. Requires Mg(2+) as cofactor. Mn(2+) is required as a cofactor. Post-translationally, glycosylated. As to expression, highly expressed in skeletal muscle.

The protein localises to the cell membrane. The protein resides in the cell surface. It catalyses the reaction L-threonyl-[receptor-protein] + ATP = O-phospho-L-threonyl-[receptor-protein] + ADP + H(+). The catalysed reaction is L-seryl-[receptor-protein] + ATP = O-phospho-L-seryl-[receptor-protein] + ADP + H(+). In terms of biological role, on ligand binding, forms a receptor complex consisting of two type II and two type I transmembrane serine/threonine kinases. Type II receptors phosphorylate and activate type I receptors which autophosphorylate, then bind and activate SMAD transcriptional regulators. Receptor for BMP2, BMP4, GDF5 and GDF6. Positively regulates chondrocyte differentiation through GDF5 interaction. Mediates induction of adipogenesis by GDF6. May promote the expression of HAMP, potentially via its interaction with BMP2. This Homo sapiens (Human) protein is Bone morphogenetic protein receptor type-1A (BMPR1A).